The primary structure comprises 373 residues: RNA cytidine acetyltransferase (373 aa).

Arg53 is an ATP binding site. Residues 216 to 218 (IAT) and 223 to 229 (TGMGYGS) contribute to the acetyl-CoA site. Residues 246 to 271 (GEFEEENEAAKPADEESDDESNLLKE) form a disordered region. Arg313 contributes to the acetyl-CoA binding site.

Belongs to the RNA cytidine acetyltransferase family. NAT10 subfamily.

The protein localises to the nucleus. The protein resides in the nucleolus. The enzyme catalyses a cytidine in 18S rRNA + acetyl-CoA + ATP + H2O = an N(4)-acetylcytidine in 18S rRNA + ADP + phosphate + CoA + H(+). It carries out the reaction a cytidine in tRNA + acetyl-CoA + ATP + H2O = an N(4)-acetylcytidine in tRNA + ADP + phosphate + CoA + H(+). RNA cytidine acetyltransferase with specificity toward both 18S rRNA and tRNAs. Catalyzes the formation of N(4)-acetylcytidine (ac4C) in 18S rRNA. Required for early nucleolar cleavages of precursor rRNA at sites A0, A1 and A2 during 18S rRNA synthesis. Catalyzes the formation of ac4C in serine and leucine tRNAs. Requires a tRNA-binding adapter protein for full tRNA acetyltransferase activity but not for 18S rRNA acetylation. The polypeptide is RNA cytidine acetyltransferase (Achlya ambisexualis (Water mold)).